The sequence spans 381 residues: Alkanesulfonate monooxygenase (381 aa).

The protein belongs to the SsuD family. In terms of assembly, homotetramer.

The enzyme catalyses an alkanesulfonate + FMNH2 + O2 = an aldehyde + FMN + sulfite + H2O + 2 H(+). Functionally, catalyzes the desulfonation of aliphatic sulfonates. The chain is Alkanesulfonate monooxygenase from Escherichia coli (strain SE11).